Consider the following 64-residue polypeptide: Large ribosomal subunit protein uL29 (64 aa).

The protein belongs to the universal ribosomal protein uL29 family.

The sequence is that of Large ribosomal subunit protein uL29 from Ralstonia pickettii (strain 12J).